Here is a 266-residue protein sequence, read N- to C-terminus: MPLGLKPTCSMCKTTSSSMWKKSPQGEILCHHCTGRGGGGAGVAGGTGGGGGGGGGFGTTTFATTSAGPSQSNGGGGGKQSKQEIHRRSARLRNTKYKSAPAAEKKVSTKGKGRRHIFKLKNPIKAPESVSTIVTAESIFYKGVYYQIGDVVSVIDEQDGKPYYAQIRGFIQDQYCEKSAALTWLIPTLASPRDQFDPASYIIGPEEDLPRKMEYLEFVCHAPSEYFKSRSSPFPTVPTRPEKGYIWTHVGPTPAITIKETVANHL.

A GATA-type zinc finger spans residues 9-33; that stretch reads CSMCKTTSSSMWKKSPQGEILCHHC. Positions 59-72 are enriched in low complexity; it reads TTTFATTSAGPSQS. Residues 59–112 form a disordered region; that stretch reads TTTFATTSAGPSQSNGGGGGKQSKQEIHRRSARLRNTKYKSAPAAEKKVSTKGK. Lysine 259 is covalently cross-linked (Glycyl lysine isopeptide (Lys-Gly) (interchain with G-Cter in SUMO2)).

In terms of assembly, component of a chromatin complex, at least composed of KDM5A, GATAD1 and EMSY. Expressed in the eye (lens, ciliary body, retina, sclera and conjunctiva) at postnatal day 2 and 10. Not detected anywhere at postnatal day 14.

The protein localises to the nucleus. Component of some chromatin complex recruited to chromatin sites methylated 'Lys-4' of histone H3 (H3K4me), with a preference for trimethylated form (H3K4me3). This Mus musculus (Mouse) protein is GATA zinc finger domain-containing protein 1 (Gatad1).